Consider the following 579-residue polypeptide: MTMLWSDEDKTMVAAVLGTKAFDYLMSSLVSAECSLMAMGSDENLQNMLSDLVERPNASNFSWNYAIFWQISRSKLGELVLGWGDGCCREAREGEESELTRILNIRLADEAQQRMRKRVLQKLHMFFGGTDEDNYVSGLDKVTDTEMFFLASMYFSFPRGQGGPGKCFTAGKHVWLSDVMRSSVDYCSRSFLMKSAGMQTVVLIPTDIGVMELGSVRTIPESLELVHSIKSCFSSFLAQVRAKQAAPLAAVVAEKKNGNNSVFPSSFPFDQSKENPKIFGQNLESGSTEFREKLALRKPVDGPLEMYRNGNRAPIINTQNGVRPVSWASFGNVKPGNSVDLYSPQAPPNNLREFVNGGREELRLNSLQHQKPGGMQIDFTNSRPVVSPVPTVESEHSDVEVSCKEKHAGPADERRPRKRGRKPANGREEPLNHVEAERQRREKLNQRFYALRAVVPNISKMDKASLLGDAIAHITDMQKRIRDAEYKLEKRGSTSVDAADINIEAASDEVIVRARCPLGTHPVAKVVEAFKETQVSVVESKLAVGNDTVYHTFVVKSSGPEQLTKEKLMAAFAGESNSL.

The tract at residues 373-439 (GGMQIDFTNS…PLNHVEAERQ (67 aa)) is disordered. The span at 382–392 (SRPVVSPVPTV) shows a compositional bias: low complexity. Basic and acidic residues-rich tracts occupy residues 393-415 (ESEHSDVEVSCKEKHAGPADERR) and 425-439 (NGREEPLNHVEAERQ). Residues 428 to 441 (EEPLNHVEAERQRR) form a basic motif; degenerate region. Residues 428 to 477 (EEPLNHVEAERQRREKLNQRFYALRAVVPNISKMDKASLLGDAIAHITDM) form the bHLH domain. A helix-loop-helix motif region spans residues 442–477 (EKLNQRFYALRAVVPNISKMDKASLLGDAIAHITDM).

It is found in the nucleus. In terms of biological role, transcription factor that negatively regulates jasmonate (JA) signaling. Negatively regulates JA-dependent response to wounding, JA-induced expression of defense genes, JA-dependent responses against herbivorous insects, and JA-dependent resistance against Botrytis cinerea infection. Plays a positive role in resistance against the bacterial pathogen Pseudomonas syringae pv tomato DC3000. The sequence is that of Transcription factor MTB2 from Solanum lycopersicum (Tomato).